The following is a 530-amino-acid chain: UDP-glucuronosyltransferase 2B14 (530 aa).

The signal sequence occupies residues 1–24 (MSVKHVSVLLLLLQLSCCFRTGSC). N-linked (GlcNAc...) asparagine glycans are attached at residues asparagine 134 and asparagine 316. Residues 494–510 (VVGFLVSCAAFLIFLVI) form a helical membrane-spanning segment.

This sequence belongs to the UDP-glycosyltransferase family.

Its subcellular location is the microsome membrane. It is found in the endoplasmic reticulum membrane. The enzyme catalyses glucuronate acceptor + UDP-alpha-D-glucuronate = acceptor beta-D-glucuronoside + UDP + H(+). In terms of biological role, UDPGT is of major importance in the conjugation and subsequent elimination of potentially toxic xenobiotics and endogenous compounds. This chain is UDP-glucuronosyltransferase 2B14 (UGT2B14), found in Oryctolagus cuniculus (Rabbit).